Reading from the N-terminus, the 868-residue chain is Leucine--tRNA ligase (868 aa).

Positions 42-52 (PYPSGKLHMGH) match the 'HIGH' region motif. The short motif at 627–631 (KMSKS) is the 'KMSKS' region element. Lysine 630 lines the ATP pocket.

This sequence belongs to the class-I aminoacyl-tRNA synthetase family.

Its subcellular location is the cytoplasm. It carries out the reaction tRNA(Leu) + L-leucine + ATP = L-leucyl-tRNA(Leu) + AMP + diphosphate. This chain is Leucine--tRNA ligase, found in Pseudomonas putida (strain GB-1).